A 173-amino-acid chain; its full sequence is NADH dehydrogenase [ubiquinone] 1 alpha subcomplex assembly factor 4 (173 aa).

G2 carries N-myristoyl glycine lipidation. The interval 16–40 (KRAEREISKRKPSMAPKHPSTRDLL) is disordered. S35 is modified (phosphoserine).

Belongs to the NDUFAF4 family. As to quaternary structure, binds calmodulin. Interacts with NDUFAF3. In terms of processing, phosphorylated on serine. Prolactin stimulate serine phosphorylation.

Its subcellular location is the mitochondrion. It is found in the membrane. May be involved in cell proliferation and survival of hormone-dependent tumor cells. Involved in the assembly of mitochondrial NADH:ubiquinone oxidoreductase complex (complex I). This Mus musculus (Mouse) protein is NADH dehydrogenase [ubiquinone] 1 alpha subcomplex assembly factor 4 (Ndufaf4).